A 296-amino-acid polypeptide reads, in one-letter code: Sulfotransferase 1C2 (296 aa).

A 3'-phosphoadenylyl sulfate-binding site is contributed by 49–54 (KSGTTW). Position 107-109 (107-109 (RTH)) interacts with substrate. The active-site Proton acceptor is the histidine 109. 3'-phosphoadenylyl sulfate is bound by residues arginine 131, serine 139, tyrosine 194, and 228 to 233 (TSFEKM). The residue at position 139 (serine 139) is a Phosphoserine. Serine 254 carries the phosphoserine modification. A 3'-phosphoadenylyl sulfate-binding site is contributed by 256–260 (FMRKG).

It belongs to the sulfotransferase 1 family. Found in gastrointestinal tract tissues, liver and kidney.

The protein resides in the cytoplasm. It is found in the lysosome. The protein localises to the mitochondrion. The catalysed reaction is a phenol + 3'-phosphoadenylyl sulfate = an aryl sulfate + adenosine 3',5'-bisphosphate + H(+). It carries out the reaction cholesterol + 3'-phosphoadenylyl sulfate = cholesterol sulfate + adenosine 3',5'-bisphosphate + H(+). Its function is as follows. Sulfotransferase that utilizes 3'-phospho-5'-adenylyl sulfate (PAPS) to catalyze the sulfate conjugation of phenolic compounds. Does not transfer sulfate to steroids, dopamine, acetaminophen, or alpha-naphthol. Except in mitochondria, where it can add sulfate to cholesterol producing cholesterol sulfate, which alters mitochondrial membrane organization, and impacts protein complex mobility increasing state-III respiration, thereby modulating mitochondrial respiration. Catalyzes the sulfation of the carcinogenic N-hydroxy-2-acetylaminofluorene leading to highly reactive intermediates capable of forming DNA adducts, potentially resulting in mutagenesis. This is Sulfotransferase 1C2 (SULT1C2) from Oryctolagus cuniculus (Rabbit).